The sequence spans 898 residues: Alanine--tRNA ligase (898 aa).

Zn(2+) is bound by residues H584, H588, C686, and H690.

This sequence belongs to the class-II aminoacyl-tRNA synthetase family. The cofactor is Zn(2+).

It localises to the cytoplasm. The catalysed reaction is tRNA(Ala) + L-alanine + ATP = L-alanyl-tRNA(Ala) + AMP + diphosphate. Catalyzes the attachment of alanine to tRNA(Ala) in a two-step reaction: alanine is first activated by ATP to form Ala-AMP and then transferred to the acceptor end of tRNA(Ala). Also edits incorrectly charged Ser-tRNA(Ala) and Gly-tRNA(Ala) via its editing domain. The polypeptide is Alanine--tRNA ligase (Myxococcus xanthus (strain DK1622)).